The following is a 306-amino-acid chain: Tryptophan 2,3-dioxygenase (306 aa).

A disordered region spans residues 1–33 (MQPPGDDAAPRCPFAGAHAPDAPHVPEAAGDDA). Residues 75-79 (FIIQH), Tyr137, and Arg141 each bind substrate. His264 lines the heme pocket. Position 278 (Thr278) interacts with substrate.

Belongs to the tryptophan 2,3-dioxygenase family. As to quaternary structure, homotetramer. Heme is required as a cofactor.

It catalyses the reaction L-tryptophan + O2 = N-formyl-L-kynurenine. It functions in the pathway amino-acid degradation; L-tryptophan degradation via kynurenine pathway; L-kynurenine from L-tryptophan: step 1/2. Its function is as follows. Heme-dependent dioxygenase that catalyzes the oxidative cleavage of the L-tryptophan (L-Trp) pyrrole ring and converts L-tryptophan to N-formyl-L-kynurenine. Catalyzes the oxidative cleavage of the indole moiety. The sequence is that of Tryptophan 2,3-dioxygenase from Burkholderia pseudomallei (strain 1106a).